A 444-amino-acid polypeptide reads, in one-letter code: Tubulin beta-8 chain (444 aa).

Residues 1-4 (MREI) carry the MREI motif motif. Positions 11, 69, 138, 142, 143, and 144 each coordinate GTP. Position 69 (Glu69) interacts with Mg(2+). Ser172 bears the Phosphoserine; by CDK1 mark. The GTP site is built by Asn204 and Asn226. The disordered stretch occupies residues 423-444 (QQYQDATAEEEEDEEYAEEEVA). Acidic residues predominate over residues 429–444 (TAEEEEDEEYAEEEVA). Glu436 bears the 5-glutamyl polyglutamate mark.

Belongs to the tubulin family. Dimer of alpha and beta chains. A typical microtubule is a hollow water-filled tube with an outer diameter of 25 nm and an inner diameter of 15 nM. Alpha-beta heterodimers associate head-to-tail to form protofilaments running lengthwise along the microtubule wall with the beta-tubulin subunit facing the microtubule plus end conferring a structural polarity. Microtubules usually have 13 protofilaments but different protofilament numbers can be found in some organisms and specialized cells. Mg(2+) is required as a cofactor. Some glutamate residues at the C-terminus are polyglutamylated, resulting in polyglutamate chains on the gamma-carboxyl group. Polyglutamylation plays a key role in microtubule severing by spastin (SPAST). SPAST preferentially recognizes and acts on microtubules decorated with short polyglutamate tails: severing activity by SPAST increases as the number of glutamates per tubulin rises from one to eight, but decreases beyond this glutamylation threshold. Glutamylation is also involved in cilia motility. In terms of processing, some glutamate residues at the C-terminus are monoglycylated but not polyglycylated due to the absence of functional TTLL10 in human. Monoglycylation is mainly limited to tubulin incorporated into cilia and flagella axonemes, which is required for their stability and maintenance. Flagella glycylation controls sperm motility. Both polyglutamylation and monoglycylation can coexist on the same protein on adjacent residues, and lowering glycylation levels increases polyglutamylation, and reciprocally. Post-translationally, phosphorylated on Ser-172 by CDK1 during the cell cycle, from metaphase to telophase, but not in interphase. This phosphorylation inhibits tubulin incorporation into microtubules. As to expression, expressed at a high level in oocytes, at different stages of development.

The protein localises to the cytoplasm. It localises to the cytoskeleton. Its subcellular location is the spindle. In terms of biological role, tubulin is the major constituent of microtubules, a cylinder consisting of laterally associated linear protofilaments composed of alpha- and beta-tubulin heterodimers. Microtubules grow by the addition of GTP-tubulin dimers to the microtubule end, where a stabilizing cap forms. Below the cap, tubulin dimers are in GDP-bound state, owing to GTPase activity of alpha-tubulin. TUBB8 has a key role in meiotic spindle assembly and oocyte maturation. The sequence is that of Tubulin beta-8 chain from Homo sapiens (Human).